A 411-amino-acid chain; its full sequence is Serine hydroxymethyltransferase (411 aa).

120-122 contributes to the (6S)-5,6,7,8-tetrahydrofolate binding site; sequence GHL. The residue at position 225 (K225) is an N6-(pyridoxal phosphate)lysine. Position 350–352 (350–352) interacts with (6S)-5,6,7,8-tetrahydrofolate; sequence SPF.

This sequence belongs to the SHMT family. As to quaternary structure, homodimer. Pyridoxal 5'-phosphate is required as a cofactor.

The protein localises to the cytoplasm. It catalyses the reaction (6R)-5,10-methylene-5,6,7,8-tetrahydrofolate + glycine + H2O = (6S)-5,6,7,8-tetrahydrofolate + L-serine. Its pathway is one-carbon metabolism; tetrahydrofolate interconversion. It functions in the pathway amino-acid biosynthesis; glycine biosynthesis; glycine from L-serine: step 1/1. Its function is as follows. Catalyzes the reversible interconversion of serine and glycine with tetrahydrofolate (THF) serving as the one-carbon carrier. This reaction serves as the major source of one-carbon groups required for the biosynthesis of purines, thymidylate, methionine, and other important biomolecules. Also exhibits THF-independent aldolase activity toward beta-hydroxyamino acids, producing glycine and aldehydes, via a retro-aldol mechanism. This Lactobacillus acidophilus (strain ATCC 700396 / NCK56 / N2 / NCFM) protein is Serine hydroxymethyltransferase.